Reading from the N-terminus, the 477-residue chain is Mitochondrial adenyl nucleotide antiporter SLC25A24 (477 aa).

A regulatory N-terminal domain region spans residues 1–174; the sequence is MHQLIRKFVF…RYWKKSTVLD (174 aa). The Mitochondrial intermembrane segment spans residues 1 to 198; it reads MHQLIRKFVF…EKTTGMWWKQ (198 aa). Residues 20–55 form the EF-hand 1 domain; sequence DNTKSFAELFEKLDVNKDGKVDVSELKTGLAAMGFS. Ca(2+) contacts are provided by Asp33, Asn35, Asp37, Lys39, Glu44, Asp69, Asp71, Asp73, Glu80, Asp100, Asn102, Asp104, Arg106, Glu111, Asp136, Asp138, Thr140, Thr142, and Glu147. 2 EF-hand domains span residues 87–122 and 123–158; these read EHEKKLRLTFKSLDKNEDGRVDAKEIQQSLKDLGIN and LSDKDAEKILHSIDVDGTMTLDWNEWREHFLFNPAE. Positions 160-169 are linker region; it reads LQQIIRYWKK. The interval 175–477 is C-terminal transmembrane transporter domain; sequence IGDSLTIPDE…YMRSGLGISK (303 aa). Solcar repeat units follow at residues 193-279, 287-372, and 384-472; these read GMWW…YKKL, VQSH…LKNT, and PGVL…MRSG. The helical transmembrane segment at 199-216 threads the bilayer; it reads LAAGGVAGAVSRTGTAPL. Topologically, residues 217 to 253 are mitochondrial matrix; that stretch reads DRMKVFMQVHSSKTNKISLVNGFKQMIKEGGVASLWR. The helical transmembrane segment at 254-273 threads the bilayer; it reads GNGVNVIKIAPETAIKFMAY. Residues 274–296 lie on the Mitochondrial intermembrane side of the membrane; that stretch reads EQYKKLLSKDGGKVQSHERFMAG. Residues 297–310 form a helical membrane-spanning segment; sequence SLAGATAQTAIYPM. Residues 311 to 346 are Mitochondrial matrix-facing; it reads EVMKTRLTLRKTGQYSGMFDCAKKILRKEGVKAFYK. A helical membrane pass occupies residues 347–366; sequence GYVPNILGIIPYAGIDLAVY. Over 367 to 389 the chain is Mitochondrial intermembrane; it reads ETLKNTWLSHYAKDTANPGVLVL. Residues 390–407 form a helical membrane-spanning segment; it reads LGCGTISSTCGQLASYPL. Topologically, residues 408–446 are mitochondrial matrix; the sequence is ALIRTRMQAMASMEGSEQVSMSKLVKKIMQKEGFFGLYR. The chain crosses the membrane as a helical span at residues 447 to 466; the sequence is GILPNFMKVIPAVSISYVVY. Over 467-477 the chain is Mitochondrial intermembrane; sequence EYMRSGLGISK.

It belongs to the mitochondrial carrier (TC 2.A.29) family. In terms of assembly, monomer.

It is found in the mitochondrion inner membrane. It catalyses the reaction Mg(2+)(out) + phosphate(in) + ATP(out) = Mg(2+)(in) + phosphate(out) + ATP(in). The enzyme catalyses ADP(out) + phosphate(in) + H(+)(out) = ADP(in) + phosphate(out) + H(+)(in). It carries out the reaction AMP(out) + phosphate(in) = AMP(in) + phosphate(out). The catalysed reaction is phosphate(in) + ATP(out) + 2 H(+)(out) = phosphate(out) + ATP(in) + 2 H(+)(in). It catalyses the reaction dADP(in) + ADP(out) = dADP(out) + ADP(in). The enzyme catalyses Mg(2+)(in) + ADP(out) + ATP(in) + H(+)(out) = Mg(2+)(out) + ADP(in) + ATP(out) + H(+)(in). It carries out the reaction ADP(out) + diphosphate(in) = ADP(in) + diphosphate(out). The catalysed reaction is dAMP(in) + ADP(out) + H(+)(out) = dAMP(out) + ADP(in) + H(+)(in). It catalyses the reaction 3'-AMP(in) + ADP(out) + H(+)(out) = 3'-AMP(out) + ADP(in) + H(+)(in). The enzyme catalyses dAMP(out) + phosphate(in) = dAMP(in) + phosphate(out). It carries out the reaction 3'-AMP(out) + phosphate(in) = 3'-AMP(in) + phosphate(out). The catalysed reaction is dADP(out) + phosphate(in) + H(+)(out) = dADP(in) + phosphate(out) + H(+)(in). With respect to regulation, activated by an increase in cytosolic calcium levels that induce a conformational change of the N-terminal regulatory domain, uncapping the channel and allowing transport. Inhibited by bathophenanthroline, mersalyl, p-hydroxymercuribenzoate, bromcresol purple and tannic acid. Functionally, electroneutral antiporter that mediates the transport of adenyl nucleotides through the inner mitochondrial membrane. Originally identified as an ATP-magnesium/inorganic phosphate antiporter, it also acts as a broad specificity adenyl nucleotide antiporter. By regulating the mitochondrial matrix adenyl nucleotide pool could adapt to changing cellular energetic demands and indirectly regulate adenyl nucleotide-dependent metabolic pathways. The sequence is that of Mitochondrial adenyl nucleotide antiporter SLC25A24 (slc25a24) from Danio rerio (Zebrafish).